The primary structure comprises 179 residues: MAKADKATAVAEIAEKFKEATAAVVTEYRGLTVSNLAELRRSLGNSTTYTVAKNTLVKRAAVEAGVEGLDDMFAGPTAIAFINGEPVDAAKAIKKFAKDNKALIVKGGYMDGRALTVGEVERIADLESREVLLSKLAGAMKAKQSQAAALFVAPASQVARLAAALQEKKAAGDSAESAA.

The protein belongs to the universal ribosomal protein uL10 family. As to quaternary structure, part of the ribosomal stalk of the 50S ribosomal subunit. The N-terminus interacts with L11 and the large rRNA to form the base of the stalk. The C-terminus forms an elongated spine to which L12 dimers bind in a sequential fashion forming a multimeric L10(L12)X complex.

Its function is as follows. Forms part of the ribosomal stalk, playing a central role in the interaction of the ribosome with GTP-bound translation factors. This Mycolicibacterium vanbaalenii (strain DSM 7251 / JCM 13017 / BCRC 16820 / KCTC 9966 / NRRL B-24157 / PYR-1) (Mycobacterium vanbaalenii) protein is Large ribosomal subunit protein uL10.